We begin with the raw amino-acid sequence, 501 residues long: Glucans biosynthesis protein G (501 aa).

Residues 1–25 (MNRRQVLTGLAALPLLQAKPDPAAA) form the signal peptide.

The protein belongs to the OpgD/OpgG family.

The protein localises to the periplasm. Its pathway is glycan metabolism; osmoregulated periplasmic glucan (OPG) biosynthesis. Its function is as follows. Involved in the biosynthesis of osmoregulated periplasmic glucans (OPGs). The chain is Glucans biosynthesis protein G from Rhodopseudomonas palustris (strain ATCC BAA-98 / CGA009).